The following is a 360-amino-acid chain: Peptide chain release factor 1 (360 aa).

Gln-235 is subject to N5-methylglutamine. Positions 285–295 (RQAAEQTDMRR) are enriched in basic and acidic residues. Residues 285 to 309 (RQAAEQTDMRRNLLGSGDRSDKIRT) are disordered.

The protein belongs to the prokaryotic/mitochondrial release factor family. Post-translationally, methylated by PrmC. Methylation increases the termination efficiency of RF1.

It is found in the cytoplasm. Its function is as follows. Peptide chain release factor 1 directs the termination of translation in response to the peptide chain termination codons UAG and UAA. The chain is Peptide chain release factor 1 (prfA) from Haemophilus influenzae (strain ATCC 51907 / DSM 11121 / KW20 / Rd).